The chain runs to 201 residues: UPF0376 protein F10G2.1 (201 aa).

The Cytoplasmic portion of the chain corresponds to 1-3 (MKH). Residues 4–24 (FLLLAIIGILFLGSTYGASVA) traverse the membrane as a helical; Signal-anchor for type II membrane protein segment. Residues 25–201 (TEKLKASNCT…LLECDFRNIQ (177 aa)) lie on the Extracellular side of the membrane. Residues Asn32 and Asn124 are each glycosylated (N-linked (GlcNAc...) asparagine).

Belongs to the UPF0376 family.

The protein resides in the membrane. The polypeptide is UPF0376 protein F10G2.1 (Caenorhabditis elegans).